An 85-amino-acid chain; its full sequence is Insecticidal toxin Vn1 (85 aa).

The first 23 residues, 1–23 (MFLYRLICLFILICIITVDISTS), serve as a signal peptide directing secretion. An intrachain disulfide couples Cys-71 to Cys-84.

As to expression, highly expressed in the venom apparatus, and weakly expressed in residual body.

It is found in the secreted. Its function is as follows. Endoparasitoid venom toxin that exhibits insecticidal activity against Tenebrio molitor pupae. Impacts genes related to immune response, environmental information processing, metabolism, and response to external stimuli in T.molitor, suggesting its involvement in the intricate parasitoid wasp-host interaction. The polypeptide is Insecticidal toxin Vn1 (Aphidius gifuensis (Parasitoid wasp)).